The primary structure comprises 68 residues: DNA-directed RNA polymerase subunit Rpo10 (68 aa).

Positions 7, 10, 44, and 45 each coordinate Zn(2+).

Belongs to the archaeal Rpo10/eukaryotic RPB10 RNA polymerase subunit family. In terms of assembly, part of the RNA polymerase complex. It depends on Zn(2+) as a cofactor.

It localises to the cytoplasm. It catalyses the reaction RNA(n) + a ribonucleoside 5'-triphosphate = RNA(n+1) + diphosphate. DNA-dependent RNA polymerase (RNAP) catalyzes the transcription of DNA into RNA using the four ribonucleoside triphosphates as substrates. In Methanococcus maripaludis (strain C7 / ATCC BAA-1331), this protein is DNA-directed RNA polymerase subunit Rpo10.